Reading from the N-terminus, the 124-residue chain is MVEPNISSYLQNQLKQAQELEENIEKIATQRYQLDLSLKEIEKTLQELNKIDDKTPVYRSIGSILYKVDDKKKLIDELEEQLELTKIRINTLDKQQKSLEEKYKELQAAIRERYNQDNKKGAVS.

This sequence belongs to the prefoldin subunit beta family. Heterohexamer of two alpha and four beta subunits.

It is found in the cytoplasm. In terms of biological role, molecular chaperone capable of stabilizing a range of proteins. Seems to fulfill an ATP-independent, HSP70-like function in archaeal de novo protein folding. This Thermoplasma volcanium (strain ATCC 51530 / DSM 4299 / JCM 9571 / NBRC 15438 / GSS1) protein is Prefoldin subunit beta (pfdB).